We begin with the raw amino-acid sequence, 251 residues long: uncharacterized protein (251 aa).

This is an uncharacterized protein from Bacillus subtilis (strain 168).